A 245-amino-acid polypeptide reads, in one-letter code: 1-(5-phosphoribosyl)-5-[(5-phosphoribosylamino)methylideneamino] imidazole-4-carboxamide isomerase (245 aa).

D7 (proton acceptor) is an active-site residue. D129 functions as the Proton donor in the catalytic mechanism.

Belongs to the HisA/HisF family.

The protein resides in the cytoplasm. The catalysed reaction is 1-(5-phospho-beta-D-ribosyl)-5-[(5-phospho-beta-D-ribosylamino)methylideneamino]imidazole-4-carboxamide = 5-[(5-phospho-1-deoxy-D-ribulos-1-ylimino)methylamino]-1-(5-phospho-beta-D-ribosyl)imidazole-4-carboxamide. It participates in amino-acid biosynthesis; L-histidine biosynthesis; L-histidine from 5-phospho-alpha-D-ribose 1-diphosphate: step 4/9. The chain is 1-(5-phosphoribosyl)-5-[(5-phosphoribosylamino)methylideneamino] imidazole-4-carboxamide isomerase from Shewanella baltica (strain OS155 / ATCC BAA-1091).